The sequence spans 269 residues: Formamidopyrimidine-DNA glycosylase (269 aa).

The Schiff-base intermediate with DNA role is filled by proline 2. Glutamate 3 serves as the catalytic Proton donor. Lysine 57 serves as the catalytic Proton donor; for beta-elimination activity. Histidine 90, arginine 109, and arginine 150 together coordinate DNA. The segment at 235-269 (QVYGKAGEQCPNCAELIQELKIGQRNTFYCSSCQV) adopts an FPG-type zinc-finger fold. The active-site Proton donor; for delta-elimination activity is the arginine 259.

It belongs to the FPG family. In terms of assembly, monomer. The cofactor is Zn(2+).

It carries out the reaction Hydrolysis of DNA containing ring-opened 7-methylguanine residues, releasing 2,6-diamino-4-hydroxy-5-(N-methyl)formamidopyrimidine.. The catalysed reaction is 2'-deoxyribonucleotide-(2'-deoxyribose 5'-phosphate)-2'-deoxyribonucleotide-DNA = a 3'-end 2'-deoxyribonucleotide-(2,3-dehydro-2,3-deoxyribose 5'-phosphate)-DNA + a 5'-end 5'-phospho-2'-deoxyribonucleoside-DNA + H(+). Involved in base excision repair of DNA damaged by oxidation or by mutagenic agents. Acts as a DNA glycosylase that recognizes and removes damaged bases. Has a preference for oxidized purines, such as 7,8-dihydro-8-oxoguanine (8-oxoG). Has AP (apurinic/apyrimidinic) lyase activity and introduces nicks in the DNA strand. Cleaves the DNA backbone by beta-delta elimination to generate a single-strand break at the site of the removed base with both 3'- and 5'-phosphates. This Vibrio atlanticus (strain LGP32) (Vibrio splendidus (strain Mel32)) protein is Formamidopyrimidine-DNA glycosylase.